A 161-amino-acid chain; its full sequence is Small ribosomal subunit protein uS9 (161 aa).

Over residues 1-21 (MATLQSLADLNRANTQTSNPE) the composition is skewed to polar residues. The interval 1–25 (MATLQSLADLNRANTQTSNPENEAP) is disordered.

This sequence belongs to the universal ribosomal protein uS9 family.

The chain is Small ribosomal subunit protein uS9 from Methylorubrum extorquens (strain CM4 / NCIMB 13688) (Methylobacterium extorquens).